Reading from the N-terminus, the 899-residue chain is Core protein VP3 (899 aa).

The segment at 1–22 (MAEPPDAATPKTSPYLKGDELS) is disordered.

Belongs to the orbivirus VP3 family.

The protein resides in the virion. In terms of biological role, the VP3 protein is one of the five proteins (with VP1, VP4, VP6 and VP7) which form the inner capsid of the virus. The chain is Core protein VP3 (Segment-3) from Antilocapra americana (Pronghorn).